A 329-amino-acid chain; its full sequence is Peroxidase 18 (329 aa).

The first 29 residues, 1 to 29, serve as a signal peptide directing secretion; the sequence is MALQFFSCKPKYTFLSSLLLLLLLSSSVA. 4 disulfides stabilise this stretch: C40–C116, C73–C78, C122–C325, and C201–C235. H71 (proton acceptor) is an active-site residue. Positions 72, 75, 77, 79, and 81 each coordinate Ca(2+). A glycan (N-linked (GlcNAc...) asparagine) is linked at N87. A substrate-binding site is contributed by I164. A heme b-binding site is contributed by H194. T195 contacts Ca(2+). Residues D249, T252, and D257 each contribute to the Ca(2+) site.

The protein belongs to the peroxidase family. Classical plant (class III) peroxidase subfamily. Heme b serves as cofactor. It depends on Ca(2+) as a cofactor.

The protein resides in the secreted. It carries out the reaction 2 a phenolic donor + H2O2 = 2 a phenolic radical donor + 2 H2O. Removal of H(2)O(2), oxidation of toxic reductants, biosynthesis and degradation of lignin, suberization, auxin catabolism, response to environmental stresses such as wounding, pathogen attack and oxidative stress. These functions might be dependent on each isozyme/isoform in each plant tissue. In Arabidopsis thaliana (Mouse-ear cress), this protein is Peroxidase 18 (PER18).